We begin with the raw amino-acid sequence, 72 residues long: uncharacterized protein (72 aa).

A signal peptide spans 1–17 (MSLGLAIAVGIVLGVVA).

This is an uncharacterized protein from Schizosaccharomyces pombe (strain 972 / ATCC 24843) (Fission yeast).